A 191-amino-acid chain; its full sequence is Peptidyl-tRNA hydrolase (191 aa).

TRNA is bound at residue Y16. The Proton acceptor role is filled by H21. Positions 67, 69, and 115 each coordinate tRNA.

This sequence belongs to the PTH family. In terms of assembly, monomer.

The protein localises to the cytoplasm. It catalyses the reaction an N-acyl-L-alpha-aminoacyl-tRNA + H2O = an N-acyl-L-amino acid + a tRNA + H(+). Its function is as follows. Hydrolyzes ribosome-free peptidyl-tRNAs (with 1 or more amino acids incorporated), which drop off the ribosome during protein synthesis, or as a result of ribosome stalling. Functionally, catalyzes the release of premature peptidyl moieties from peptidyl-tRNA molecules trapped in stalled 50S ribosomal subunits, and thus maintains levels of free tRNAs and 50S ribosomes. This is Peptidyl-tRNA hydrolase from Wigglesworthia glossinidia brevipalpis.